The primary structure comprises 292 residues: 2-(5''-triphosphoribosyl)-3'-dephosphocoenzyme-A synthase (292 aa).

This sequence belongs to the CitG/MdcB family.

It carries out the reaction 3'-dephospho-CoA + ATP = 2'-(5''-triphospho-alpha-D-ribosyl)-3'-dephospho-CoA + adenine. Catalyzes the formation of 2-(5''-triphosphoribosyl)-3'-dephosphocoenzyme-A, the precursor of the prosthetic group of the holo-acyl carrier protein (gamma chain) of citrate lyase, from ATP and dephospho-CoA. The polypeptide is 2-(5''-triphosphoribosyl)-3'-dephosphocoenzyme-A synthase (Escherichia coli (strain SMS-3-5 / SECEC)).